Consider the following 612-residue polypeptide: Apoptosis-inducing factor 1, mitochondrial (612 aa).

2 short sequence motifs (mitochondrial localization signal) span residues 1-30 and 62-88; these read MFRC…PKQR and KMDN…KTIK. Residues 1–54 constitute a mitochondrion transit peptide; that stretch reads MFRCGGLAGAFKQKLVPLVRTVYVQRPKQRNRLPGNLFQQWRVPLELQMARQMA. A propeptide spans 55–101 (removed in mature form); that stretch reads SSGSSGGKMDNSVLVLIVGLSTIGAGAYAYKTIKEDQKRYNERVMGL. K108 carries the N6-succinyllysine modification. At S115 the chain carries Phosphoserine. Positions 133–482 are FAD-dependent oxidoreductase; it reads FLLIGGGTAA…KPYWHQSMFW (350 aa). FAD is bound by residues 137 to 141, 163 to 164, R171, and K176; these read GGGTA and ED. W195 provides a ligand contact to NAD(+). V232 serves as a coordination point for FAD. K254 participates in a covalent cross-link: Glycyl lysine isopeptide (Lys-Gly) (interchain with G-Cter in ubiquitin). S267 carries the post-translational modification Phosphoserine. An FAD-binding site is contributed by R284. NAD(+)-binding positions include 307–310, E335, and K341; that span reads GGFL. A Phosphoserine modification is found at S370. K387 bears the N6-acetyllysine mark. G398 is a binding site for NAD(+). Residue D437 coordinates FAD. The Nuclear localization signal signature appears at 445–450; that stretch reads KLGRRR. NAD(+) contacts are provided by residues 452–453, W482, and E492; that span reads EH. FAD is bound by residues 453–454 and W482; that span reads HH. Residues 512–528 show a composition bias toward polar residues; the sequence is AQDNPKSATEQSGTGIR. The disordered stretch occupies residues 512–551; the sequence is AQDNPKSATEQSGTGIRSESETESEASEITIPPSAPAVPQ. T520 carries the post-translational modification Phosphothreonine. 2 positions are modified to phosphoserine: S523 and S529. N582 is an NAD(+) binding site. The residue at position 592 (K592) is an N6-acetyllysine.

Belongs to the FAD-dependent oxidoreductase family. As to quaternary structure, monomer (oxidized form). Homodimer (reduced form). Upon reduction with NADH, undergoes dimerization and forms tight, long-lived FADH2-NAD charge transfer complexes (CTC) resistant to oxidation. Also dimerizes with isoform 3 preventing its release from mitochondria. Interacts with XIAP/BIRC4. Interacts (via N-terminus) with EIF3G (via C-terminus). Interacts with PRELID1. Interacts with CHCHD4; the interaction increases in presence of NADH. Interacts with processed form of PARP1 (Poly [ADP-ribose] polymerase 1, processed C-terminus); interaction is mediated with poly-ADP-ribose chains attached to PARP1, promoting translocation into the nucleus. Requires FAD as cofactor. Under normal conditions, a 54-residue N-terminal segment is first proteolytically removed during or just after translocation into the mitochondrial intermembrane space (IMS) by the mitochondrial processing peptidase (MPP) to form the inner-membrane-anchored mature form (AIFmit). During apoptosis, it is further proteolytically processed at amino-acid position 101 leading to the generation of the mature form, which is confined to the mitochondrial IMS in a soluble form (AIFsol). AIFsol is released to the cytoplasm in response to specific death signals, and translocated to the nucleus, where it induces nuclear apoptosis in a caspase-independent manner. In terms of processing, ubiquitination by XIAP/BIRC4 does not lead to proteasomal degradation. Ubiquitination at Lys-254 by XIAP/BIRC4 blocks its ability to bind DNA and induce chromatin degradation, thereby inhibiting its ability to induce cell death. As to expression, expressed in cortical neurons (at protein level). In terms of tissue distribution, expressed in liver (at protein level).

It localises to the mitochondrion intermembrane space. It is found in the mitochondrion inner membrane. The protein resides in the cytoplasm. Its subcellular location is the nucleus. The protein localises to the perinuclear region. It localises to the mitochondrion. It is found in the cytosol. It catalyses the reaction A + NADH + H(+) = AH2 + NAD(+). Functions both as NADH oxidoreductase and as regulator of apoptosis. In response to apoptotic stimuli, it is released from the mitochondrion intermembrane space into the cytosol and to the nucleus, where it functions as a proapoptotic factor in a caspase-independent pathway. Release into the cytoplasm is mediated upon binding to poly-ADP-ribose chains. The soluble form (AIFsol) found in the nucleus induces 'parthanatos' i.e. caspase-independent fragmentation of chromosomal DNA. Binds to DNA in a sequence-independent manner. Interacts with EIF3G, and thereby inhibits the EIF3 machinery and protein synthesis, and activates caspase-7 to amplify apoptosis. Plays a critical role in caspase-independent, pyknotic cell death in hydrogen peroxide-exposed cells. In contrast, participates in normal mitochondrial metabolism. Plays an important role in the regulation of respiratory chain biogenesis by interacting with CHCHD4 and controlling CHCHD4 mitochondrial import. The chain is Apoptosis-inducing factor 1, mitochondrial from Mus musculus (Mouse).